Here is a 398-residue protein sequence, read N- to C-terminus: MNIHEYQAKAVLREFGVSVSKGVPILKASDAEAAAKQLGGPVWVVKSQIHAGGRGKGKFKEASAGDKGGVRLAKSIDEVKQFVDQMLGKTLVTVQTGPAGKQVNRLYLEEGADIDKEFYLSALVDRETSRIAFVVSTEGGMDIEKVAHDTPEKIVTFSVDPATGIMPHHGRKVAQALKLKGDQAKQAEKLVNQLYTAFIAKDMSMLEINPLILSKQGELRCLDAKISFDSNAIYRHPDVMELRDETEEDAKEIEASKYDLAYIALDGTIGCMVNGAGLAMATLDIIKLYGESPANFLDVGGGASEEKVTAAFKIITADPNVKGILVNIFGGIMKCDVIAAGVVAAVKAVGLKVPLVVRLEGTNVEEGKKIIRESGLNVLPADDLDDAAQKIVKAVKGK.

An ATP-grasp domain is found at 9 to 254; that stretch reads KAVLREFGVS…ETEEDAKEIE (246 aa). ATP is bound by residues lysine 46, 53 to 55, glutamate 109, alanine 112, and glutamate 117; that span reads GRG. Mg(2+) is bound by residues asparagine 209 and aspartate 223. Substrate-binding positions include asparagine 274 and 331–333; that span reads GIM.

Belongs to the succinate/malate CoA ligase beta subunit family. Heterotetramer of two alpha and two beta subunits. Mg(2+) is required as a cofactor.

The enzyme catalyses succinate + ATP + CoA = succinyl-CoA + ADP + phosphate. It carries out the reaction GTP + succinate + CoA = succinyl-CoA + GDP + phosphate. It participates in carbohydrate metabolism; tricarboxylic acid cycle; succinate from succinyl-CoA (ligase route): step 1/1. Functionally, succinyl-CoA synthetase functions in the citric acid cycle (TCA), coupling the hydrolysis of succinyl-CoA to the synthesis of either ATP or GTP and thus represents the only step of substrate-level phosphorylation in the TCA. The beta subunit provides nucleotide specificity of the enzyme and binds the substrate succinate, while the binding sites for coenzyme A and phosphate are found in the alpha subunit. The polypeptide is Succinate--CoA ligase [ADP-forming] subunit beta (Afipia carboxidovorans (strain ATCC 49405 / DSM 1227 / KCTC 32145 / OM5) (Oligotropha carboxidovorans)).